The following is a 130-amino-acid chain: Small ribosomal subunit protein uS9 (130 aa).

The protein belongs to the universal ribosomal protein uS9 family.

This is Small ribosomal subunit protein uS9 from Bacillus velezensis (strain DSM 23117 / BGSC 10A6 / LMG 26770 / FZB42) (Bacillus amyloliquefaciens subsp. plantarum).